The primary structure comprises 242 residues: ADP-dependent L-serine kinase SerK (242 aa).

Residue Glu30 is part of the active site. ADP-binding residues include Ser43, Ile49, Trp51, and Lys52. O-phospho-L-serine is bound at residue Val68. 5 residues coordinate ADP: Asp69, Gly70, His71, His72, and Arg73. Position 69 (Asp69) interacts with Mg(2+). O-phospho-L-serine-binding residues include Gly70, His71, and His72. O-phospho-L-serine contacts are provided by Trp102, Lys221, Thr223, and His225.

The protein belongs to the SerK family. Requires Mg(2+) as cofactor.

The enzyme catalyses L-serine + ADP = O-phospho-L-serine + AMP + H(+). Its pathway is amino-acid biosynthesis; L-cysteine biosynthesis; L-cysteine from L-serine: step 1/2. Free serine kinase that uses ADP to phosphorylate L-serine to yield O-phospho-L-serine and AMP. The sequence is that of ADP-dependent L-serine kinase SerK from Thermococcus kodakarensis (strain ATCC BAA-918 / JCM 12380 / KOD1) (Pyrococcus kodakaraensis (strain KOD1)).